The chain runs to 156 residues: Phosphopantetheine adenylyltransferase (156 aa).

Belongs to the eukaryotic CoaD family.

It localises to the cytoplasm. It carries out the reaction (R)-4'-phosphopantetheine + ATP + H(+) = 3'-dephospho-CoA + diphosphate. The protein operates within cofactor biosynthesis; coenzyme A biosynthesis. Reversibly transfers an adenylyl group from ATP to 4'-phosphopantetheine, yielding dephospho-CoA (dPCoA) and pyrophosphate. The chain is Phosphopantetheine adenylyltransferase from Methanosarcina acetivorans (strain ATCC 35395 / DSM 2834 / JCM 12185 / C2A).